Consider the following 280-residue polypeptide: Probable 2-(5''-triphosphoribosyl)-3'-dephosphocoenzyme-A synthase (280 aa).

This sequence belongs to the CitG/MdcB family.

It carries out the reaction 3'-dephospho-CoA + ATP = 2'-(5''-triphospho-alpha-D-ribosyl)-3'-dephospho-CoA + adenine. In Lactiplantibacillus plantarum (strain ATCC BAA-793 / NCIMB 8826 / WCFS1) (Lactobacillus plantarum), this protein is Probable 2-(5''-triphosphoribosyl)-3'-dephosphocoenzyme-A synthase.